A 68-amino-acid polypeptide reads, in one-letter code: ATP synthase F(0) complex subunit 8 (68 aa).

Residues 8–24 (TWFTTILSMFLTLFIIF) form a helical membrane-spanning segment. An N6-acetyllysine; alternate modification is found at Lys54. An N6-succinyllysine; alternate modification is found at Lys54. Residue Lys57 is modified to N6-acetyllysine.

The protein belongs to the ATPase protein 8 family. In terms of assembly, component of the ATP synthase complex composed at least of ATP5F1A/subunit alpha, ATP5F1B/subunit beta, ATP5MC1/subunit c (homooctomer), MT-ATP6/subunit a, MT-ATP8/subunit 8, ATP5ME/subunit e, ATP5MF/subunit f, ATP5MG/subunit g, ATP5MK/subunit k, ATP5MJ/subunit j, ATP5F1C/subunit gamma, ATP5F1D/subunit delta, ATP5F1E/subunit epsilon, ATP5PF/subunit F6, ATP5PB/subunit b, ATP5PD/subunit d, ATP5PO/subunit OSCP. ATP synthase complex consists of a soluble F(1) head domain (subunits alpha(3) and beta(3)) - the catalytic core - and a membrane F(0) domain - the membrane proton channel (subunits c, a, 8, e, f, g, k and j). These two domains are linked by a central stalk (subunits gamma, delta, and epsilon) rotating inside the F1 region and a stationary peripheral stalk (subunits F6, b, d, and OSCP). Interacts with PRICKLE3.

Its subcellular location is the mitochondrion membrane. In terms of biological role, subunit 8, of the mitochondrial membrane ATP synthase complex (F(1)F(0) ATP synthase or Complex V) that produces ATP from ADP in the presence of a proton gradient across the membrane which is generated by electron transport complexes of the respiratory chain. ATP synthase complex consist of a soluble F(1) head domain - the catalytic core - and a membrane F(1) domain - the membrane proton channel. These two domains are linked by a central stalk rotating inside the F(1) region and a stationary peripheral stalk. During catalysis, ATP synthesis in the catalytic domain of F(1) is coupled via a rotary mechanism of the central stalk subunits to proton translocation. In vivo, can only synthesize ATP although its ATP hydrolase activity can be activated artificially in vitro. Part of the complex F(0) domain. In Hippopotamus amphibius (Hippopotamus), this protein is ATP synthase F(0) complex subunit 8.